The following is a 243-amino-acid chain: MSGHSKWSTIKRKKGALDAKRNKIFTKLIREITIAAKIGGGDVESNPRLRVAVNKAKVANMPKDNIEKAIKKGIGGNEGVEYFEITYEAYAPYGVALMIKCLTDNKNRTSSDVKSVLAKGGGSLGTPGSVSYMFYRKGLIVYNLEKYLEDEIMEFALEAGVEDILVSNNEAEVITSPDDFDKVLSFLKTKFKEEMAEVALIPENKISLNKEQAEKIILLIEKLEDFDDVQEVIHNLEIPEELS.

It belongs to the TACO1 family.

The protein localises to the cytoplasm. This Borrelia garinii subsp. bavariensis (strain ATCC BAA-2496 / DSM 23469 / PBi) (Borreliella bavariensis) protein is Probable transcriptional regulatory protein BG0025.